The primary structure comprises 181 residues: Alkyl hydroperoxide reductase AhpD (181 aa).

Catalysis depends on Cys-131, which acts as the Proton donor. Cys-131 and Cys-134 are joined by a disulfide. Cys-134 acts as the Cysteine sulfenic acid (-SOH) intermediate in catalysis.

The protein belongs to the AhpD family.

It catalyses the reaction N(6)-[(R)-dihydrolipoyl]-L-lysyl-[lipoyl-carrier protein] + a hydroperoxide = N(6)-[(R)-lipoyl]-L-lysyl-[lipoyl-carrier protein] + an alcohol + H2O. In terms of biological role, antioxidant protein with alkyl hydroperoxidase activity. Required for the reduction of the AhpC active site cysteine residues and for the regeneration of the AhpC enzyme activity. The protein is Alkyl hydroperoxide reductase AhpD of Rhodopseudomonas palustris (strain BisB18).